A 960-amino-acid polypeptide reads, in one-letter code: Dynamin-like GTPase OPA1, mitochondrial (960 aa).

Residues 1 to 87 (MWRLRRAAVA…IKYGYQPRRN (87 aa)) constitute a mitochondrion transit peptide. At 88 to 96 (FWPARLATR) the chain is on the mitochondrial matrix side. The helical transmembrane segment at 97-113 (LLKLRYLILGSAVGGGY) threads the bilayer. Residues 114–770 (TAKKTFDQWK…NAIENMVGPD (657 aa)) are Mitochondrial intermembrane-facing. Positions 210-254 (SDKEKIDQLQEELLHTQLKYQRILERLEKENKELRKLVLQKDDKG) form a coiled coil. Position 228 is an N6-acetyllysine (K228). One can recognise a Dynamin-type G domain in the interval 285-561 (QDHLPRVVVV…FWKMVRESVE (277 aa)). The segment at 295–302 (GDQSAGKT) is G1 motif. GTP contacts are provided by S298, G300, K301, T302, S303, and G317. T302 provides a ligand contact to Mg(2+). Residues 321–324 (MMTR) are G2 motif. Positions 323 and 398 each coordinate Mg(2+). The tract at residues 398-401 (DLPG) is G3 motif. A G4 motif region spans residues 467-470 (TKVD). The GTP site is built by K468, D470, and T503. Residues 501 to 504 (VVTG) are G5 motif. Stalk region regions lie at residues 589 to 836 (DRNE…IKDT) and 874 to 928 (CNDV…IKLL). The paddle region stretch occupies residues 736 to 856 (SDKQQWDAAI…KTALNHCNLC (121 aa)). Residues 771–781 (WKKRWLYWKNR) lie within the membrane without spanning it. Residues 782–960 (TQEQCVHNET…AFIEALHQEK (179 aa)) are Mitochondrial intermembrane-facing. A disulfide bridge connects residues C856 and C874. Residues 895 to 960 (RQQLTNTEVR…AFIEALHQEK (66 aa)) adopt a coiled-coil conformation.

The protein belongs to the TRAFAC class dynamin-like GTPase superfamily. Dynamin/Fzo/YdjA family. Oligomeric complex consisting of membrane-bound and soluble forms of OPA1. Interacts with RCC1L; RCC1L acts as a guanine nucleotide exchange factor (GEF) for OPA1 by exchanging bound GDP for free GTP. Interacts with CHCHD3 and IMMT; these interactions occur preferentially with soluble OPA1 forms. Interacts with PRELID1. Post-translationally, cleaved by OMA1 or YME1L downstream of the transmembrane region in response to different signals to generate soluble forms. Cleaved by OMA1 at position S1 following stress conditions, generating the short soluble form (Dynamin-like GTPase OPA1, short form; S-OPA1). AFG3L2 is involved in the regulation of OMA1-dependent processing of OPA1. PARL-dependent proteolytic processing releases an antiapoptotic soluble form not required for mitochondrial fusion.

The protein localises to the mitochondrion inner membrane. It is found in the mitochondrion intermembrane space. It carries out the reaction GTP + H2O = GDP + phosphate + H(+). With respect to regulation, activated by guanine nucleotide exchange factor RCC1L. In terms of biological role, dynamin-related GTPase that is essential for normal mitochondrial morphology by mediating fusion of the mitochondrial inner membranes, regulating cristae morphology and maintaining respiratory chain function. Exists in two forms: the transmembrane, long form (Dynamin-like GTPase OPA1, long form; L-OPA1), which is tethered to the inner mitochondrial membrane, and the short soluble form (Dynamin-like GTPase OPA1, short form; S-OPA1), which results from proteolytic cleavage and localizes in the intermembrane space. Both forms (L-OPA1 and S-OPA1) cooperate to catalyze the fusion of the mitochondrial inner membrane. The equilibrium between L-OPA1 and S-OPA1 is essential: excess levels of S-OPA1, produced by cleavage by OMA1 following loss of mitochondrial membrane potential, lead to an impaired equilibrium between L-OPA1 and S-OPA1, inhibiting mitochondrial fusion. The balance between L-OPA1 and S-OPA1 also influences cristae shape and morphology. Involved in remodeling cristae and the release of cytochrome c during apoptosis. Proteolytic processing by PARL in response to intrinsic apoptotic signals may lead to disassembly of OPA1 oligomers and release of the caspase activator cytochrome C (CYCS) into the mitochondrial intermembrane space. Acts as a regulator of T-helper Th17 cells, which are characterized by cells with fused mitochondria with tight cristae, by mediating mitochondrial membrane remodeling: OPA1 is required for interleukin-17 (IL-17) production. Its role in mitochondrial morphology is required for mitochondrial genome maintenance. Constitutes the transmembrane long form (L-OPA1) that plays a central role in mitochondrial inner membrane fusion and cristae morphology. L-OPA1 and the soluble short form (S-OPA1) form higher-order helical assemblies that coordinate the fusion of mitochondrial inner membranes. Inner membrane-anchored L-OPA1 molecules initiate membrane remodeling by recruiting soluble S-OPA1 to rapidly polymerize into a flexible cylindrical scaffold encaging the mitochondrial inner membrane. Once at the membrane surface, the formation of S-OPA1 helices induce bilayer curvature. OPA1 dimerization through the paddle region, which inserts into cardiolipin-containing membrane, promotes GTP hydrolysis and the helical assembly of a flexible OPA1 lattice on the membrane, which drives membrane curvature and mitochondrial fusion. Plays a role in the maintenance and remodeling of mitochondrial cristae, some invaginations of the mitochondrial inner membrane that provide an increase in the surface area. Probably acts by forming helical filaments at the inside of inner membrane tubes with the shape and dimensions of crista junctions. The equilibrium between L-OPA1 and S-OPA1 influences cristae shape and morphology: increased L-OPA1 levels promote cristae stacking and elongated mitochondria, while increased S-OPA1 levels correlated with irregular cristae packing and round mitochondria shape. Its function is as follows. Constitutes the soluble short form (S-OPA1) generated by cleavage by OMA1, which plays a central role in mitochondrial inner membrane fusion and cristae morphology. The transmembrane long form (L-OPA1) and the S-OPA1 form higher-order helical assemblies that coordinate the fusion of mitochondrial inner membranes. Inner membrane-anchored L-OPA1 molecules initiate membrane remodeling by recruiting soluble S-OPA1 to rapidly polymerize into a flexible cylindrical scaffold encaging the mitochondrial inner membrane. Once at the membrane surface, the formation of S-OPA1 helices induce bilayer curvature. OPA1 dimerization through the paddle region, which inserts into cardiolipin-containing membrane, promotes GTP hydrolysis and the helical assembly of a flexible OPA1 lattice on the membrane, which drives membrane curvature and mitochondrial fusion. Excess levels of S-OPA1 produced by cleavage by OMA1 following stress conditions that induce loss of mitochondrial membrane potential, lead to an impaired equilibrium between L-OPA1 and S-OPA1, thereby inhibiting mitochondrial fusion. Involved in mitochondrial safeguard in response to transient mitochondrial membrane depolarization by mediating flickering: cleavage by OMA1 leads to excess production of S-OPA1, preventing mitochondrial hyperfusion. Plays a role in the maintenance and remodeling of mitochondrial cristae, some invaginations of the mitochondrial inner membrane that provide an increase in the surface area. Probably acts by forming helical filaments at the inside of inner membrane tubes with the shape and dimensions of crista junctions. The equilibrium between L-OPA1 and S-OPA1 influences cristae shape and morphology: increased L-OPA1 levels promote cristae stacking and elongated mitochondria, while increased S-OPA1 levels correlated with irregular cristae packing and round mitochondria shape. The protein is Dynamin-like GTPase OPA1, mitochondrial of Pongo abelii (Sumatran orangutan).